We begin with the raw amino-acid sequence, 103 residues long: High-potential iron-sulfur protein (103 aa).

Residues 1-28 form the signal peptide; the sequence is MSNRRLFLKSIPIMAAAGAVGMAGLARA. Residues cysteine 66, cysteine 69, cysteine 82, and cysteine 96 each contribute to the [4Fe-4S] cluster site.

This sequence belongs to the high-potential iron-sulfur protein (HiPIP) family. In terms of assembly, homodimer.

The protein localises to the periplasm. In terms of biological role, specific class of high-redox-potential 4Fe-4S ferredoxins. Functions in anaerobic electron transport in most purple and in some other photosynthetic bacteria and in at least one genus (Paracoccus) of halophilic, denitrifying bacteria. The sequence is that of High-potential iron-sulfur protein (hip) from Ralstonia nicotianae (strain ATCC BAA-1114 / GMI1000) (Ralstonia solanacearum).